The sequence spans 190 residues: Peptidyl-tRNA hydrolase (190 aa).

Tyrosine 14 is a binding site for tRNA. Histidine 19 acts as the Proton acceptor in catalysis. Residues tyrosine 63, asparagine 65, and asparagine 112 each coordinate tRNA.

The protein belongs to the PTH family. As to quaternary structure, monomer.

The protein resides in the cytoplasm. The catalysed reaction is an N-acyl-L-alpha-aminoacyl-tRNA + H2O = an N-acyl-L-amino acid + a tRNA + H(+). Functionally, hydrolyzes ribosome-free peptidyl-tRNAs (with 1 or more amino acids incorporated), which drop off the ribosome during protein synthesis, or as a result of ribosome stalling. Its function is as follows. Catalyzes the release of premature peptidyl moieties from peptidyl-tRNA molecules trapped in stalled 50S ribosomal subunits, and thus maintains levels of free tRNAs and 50S ribosomes. In Kosmotoga olearia (strain ATCC BAA-1733 / DSM 21960 / TBF 19.5.1), this protein is Peptidyl-tRNA hydrolase.